The following is an 887-amino-acid chain: MEKKLLIIVIVFLFSTIQVFCRIDDKTFVISNETYLSYHFPVDSEYFSSLNFEHYEGPSFQLDFECITFNGTICFSQIYPEIKKKIYGTSISYSTQKTYKLDQELFPTPIVSSPFQPPTKGGISILKGTFLTFSEKTFYQVIYPKKQKIFILDSESLSFDATNFKVNCPPGCGYQIIKWDNGNLFNFSYSNPSISVVKINPSNIIVNGSDFCDSSYSSNITIDGVIIPNSNYEKDEDSIVIIYTQQHTIKSLMKIETSNVTSVEIEIVFKPEPLLINSVPYSKGGLLILEGLRLSSNTTNKNNNNNNIIIKIGNITCSNAISISNDSITCNLNPGFNNKSVTLNNLPVSVTINNITNENKLLFNYGIVKLNPNKYSLPDRVLQLNGDCLGNSNGTIVYLNGKETLLNDLKINNQETTLSFKIPDEFKSKLNVSIKVNDILSNEIQIDISFYASHSNEQPSTNGNTNIIFTLYNIKSENYNKIPSIIIIPEQIVINGVSVNSPTNQDVHSYSFLIPAGCGKKDIQIIIGSQSCLSSITYFEPIIKNCLVSGFDGTNGNIICDGSFGNKDYLIKSSVLFSNDEIIPPSINSTTFSFPLISGYHSDDLIFQMCGVQSKPFKLNISPSLKGINQSQMETLGGKFYILGEFFSANINCSVFCNDKEYEKKFENSKTISFDLQIPGPNDITCNYTFDNGKNTGDFKIEYPLPLIENTSSINVNGGNLTIYGKNFYNVSNIKVEVDNQLKCNKIEFINLNSLTCFLPPFIETLFNDQKLLLNSSTTIFSKKLLLNVTFESKTWSGYIFQYSKEEIKNNDTSENSTNDILNHEKNNNNQKDGSSLSKKSIILLSILLPSFIILIVSLAIVILVIKRNKTKHSKNMSSKEKELMKQ.

Residues 1–21 (MEKKLLIIVIVFLFSTIQVFC) form the signal peptide. Topologically, residues 22 to 845 (RIDDKTFVIS…SLSKKSIILL (824 aa)) are extracellular. N-linked (GlcNAc...) asparagine glycans are attached at residues Asn-32, Asn-70, Asn-186, Asn-207, Asn-219, Asn-259, Asn-297, Asn-314, Asn-325, Asn-338, Asn-354, Asn-393, Asn-431, Asn-588, Asn-629, Asn-652, Asn-687, Asn-710, Asn-720, Asn-730, Asn-775, Asn-788, Asn-811, and Asn-816. Residues 277–365 (NSVPYSKGGL…TNENKLLFNY (89 aa)) enclose the IPT/TIG 1 domain. The IPT/TIG 2 domain maps to 710 to 767 (NTSSINVNGGNLTIYGKNFYNVSNIKVEVDNQLKCNKIEFINLNSLTCFLPPFIETLF). Positions 811 to 835 (NDTSENSTNDILNHEKNNNNQKDGS) are disordered. Residues 846-866 (SILLPSFIILIVSLAIVILVI) form a helical membrane-spanning segment. The Cytoplasmic segment spans residues 867-887 (KRNKTKHSKNMSSKEKELMKQ).

It is found in the membrane. In Dictyostelium discoideum (Social amoeba), this protein is Tiger protein O1 (tgrO1).